The following is a 282-amino-acid chain: ADP-ribosyl cyclase/cyclic ADP-ribose hydrolase (282 aa).

Positions 1–24 are cleaved as a signal peptide; it reads MSPVAIIACVCLAVTLTSISPSEA. Disulfide bonds link Cys-39/Cys-58, Cys-75/Cys-155, Cys-136/Cys-149, Cys-230/Cys-251, and Cys-263/Cys-272.

The protein belongs to the ADP-ribosyl cyclase family. Has different isoforms which may be the result of different amounts of phosphorylation. In terms of tissue distribution, immature occoyctes. Oocytes.

The protein localises to the cytoplasmic vesicle. It carries out the reaction NAD(+) = cyclic ADP-beta-D-ribose + nicotinamide + H(+). The enzyme catalyses nicotinate + NADP(+) = nicotinate-adenine dinucleotide phosphate + nicotinamide. The catalysed reaction is 2'-phospho-cyclic ADP-ribose + nicotinate = nicotinate-adenine dinucleotide phosphate. With respect to regulation, activity is presumably regulated by its sequestration in vesicles before egg fertilization. After fertilization and upon NADase release, it could then be regulated via its potential phosphorylation sites. Synthesizes cyclic ADP-ribose (cADPR), a second messenger for calcium mobilization from endoplasmic reticulum; ADP-ribose is a minor product. Synthesizes the Ca(2+) mobilizer nicotinate-adenine dinucleotide phosphate from 2'-phospho-cADPR and nicotinic acid as well as from NADP(+) and nicotinic acid; with NADP(+) as substrate preferentially catalyzes NADP(+) hydrolysis rather than NAADP(+) synthesis, about 70-fold better at pH 7.4. Has cADPR hydrolase activity at very high enzyme concentrations, which is probably not physiological. The conversion of NAD(+) into ADP-ribose is also only observed at high enzyme concentrations and results from the hydrolysis of cADP-ribose. The protein is ADP-ribosyl cyclase/cyclic ADP-ribose hydrolase of Aplysia californica (California sea hare).